The primary structure comprises 852 residues: Vacuolar protein sorting-associated protein 16 homolog (852 aa).

Belongs to the VPS16 family. In terms of assembly, probable core component of at least two putative endosomal tethering complexes, the homotypic fusion and vacuole protein sorting (HOPS) complex and the class C core vacuole/endosome tethering (CORVET) complex. Their common core is composed of the class C Vps proteins vps-11, vps-16 and vps-18, which in HOPS further associates with vps-33.1, vps-39 and vps-41 and in CORVET with vps-8 and vps-33.2.

Its subcellular location is the late endosome membrane. The protein resides in the lysosome membrane. In terms of biological role, plays a role in vesicle-mediated protein trafficking to lysosomal compartments including the endocytic membrane transport pathways. Believed to act as a core component of the putative HOPS and CORVET endosomal tethering complexes which are proposed to be involved in the rab-5-to-rab-7 endosome conversion probably implicating sand-1, and via binding SNAREs and SNARE complexes to mediate tethering and docking events during SNARE-mediated membrane fusion. The HOPS complex is proposed to be recruited to rab-7 on the late endosomal membrane and to regulate late endocytic, phagocytic and autophagic traffic towards lysosomes. Within the HOPS complex, contributes to the normal development of gut granules in the adult intestine. The CORVET complex is proposed to function as a rab-5 effector to mediate early endosome fusion probably in specific endosome subpopulations. Required for recruitment of vps-33.1 to the HOPS complex. Required for fusion of endosomes and autophagosomes with lysosomes; the function is dependent on its association with vps-33.1 but not vps-33.2. This is Vacuolar protein sorting-associated protein 16 homolog from Caenorhabditis elegans.